We begin with the raw amino-acid sequence, 341 residues long: Protein huluwa (341 aa).

The Extracellular portion of the chain corresponds to 1-36 (MVTLSPAYLPSDGGTQAASAAPSVEENWVVQPSLTL). A helical membrane pass occupies residues 37–57 (LVLLLVPCVLLLFFLNCFLLF). Over 58–341 (HRLPAFSLRK…PMMCSKQYWI (284 aa)) the chain is Cytoplasmic. Positions 206–211 (VPPNTP) match the VPPNSP motif motif.

It belongs to the huluwa family. As to quaternary structure, interacts with axin1; leading to promote the tankyrase-mediated degradation of axin. Interacts with axin2; leading to promote the tankyrase-mediated degradation of axin.

It localises to the cell membrane. Functionally, key maternal determinant of the dorsal organizer and body axis formation in vertebrates that acts by promoting stabilization of beta-catenin (ctnnb1). Localizes on the plasma membrane of the future dorsal blastomeres in early blastulas and binds to and promotes the tankyrase-mediated degradation of axin (axin1 and axin2). Axin degradation results in stabilization and nuclear translocation of beta-catenin (ctnnb1) for activating organizer-specific target gene expression. This is Protein huluwa from Xenopus laevis (African clawed frog).